The sequence spans 461 residues: Elongation factor 1-alpha, oocyte form (461 aa).

A N,N,N-trimethylglycine modification is found at Gly2. In terms of domain architecture, tr-type G spans 5–242 (KIHINIVVIG…DCIIPPQRPT (238 aa)). The tract at residues 14–21 (GHVDSGKS) is G1. 14-21 (GHVDSGKS) provides a ligand contact to GTP. A G2 region spans residues 70 to 74 (GITID). The G3 stretch occupies residues 91–94 (DAPG). Residues 91–95 (DAPGH) and 153–156 (NKMD) each bind GTP. The G4 stretch occupies residues 153–156 (NKMD). The interval 194-196 (SGW) is G5. Glu301 and Glu374 each carry 5-glutamyl glycerylphosphorylethanolamine.

It belongs to the TRAFAC class translation factor GTPase superfamily. Classic translation factor GTPase family. EF-Tu/EF-1A subfamily. As to expression, oocyte.

Its subcellular location is the cytoplasm. This protein promotes the GTP-dependent binding of aminoacyl-tRNA to the A-site of ribosomes during protein biosynthesis. The chain is Elongation factor 1-alpha, oocyte form from Xenopus laevis (African clawed frog).